The primary structure comprises 500 residues: ATP synthase subunit alpha (500 aa).

168 to 175 (GDRQTGKT) contacts ATP.

This sequence belongs to the ATPase alpha/beta chains family. As to quaternary structure, F-type ATPases have 2 components, CF(1) - the catalytic core - and CF(0) - the membrane proton channel. CF(1) has five subunits: alpha(3), beta(3), gamma(1), delta(1), epsilon(1). CF(0) has three main subunits: a(1), b(2) and c(9-12). The alpha and beta chains form an alternating ring which encloses part of the gamma chain. CF(1) is attached to CF(0) by a central stalk formed by the gamma and epsilon chains, while a peripheral stalk is formed by the delta and b chains.

The protein resides in the cell membrane. It catalyses the reaction ATP + H2O + 4 H(+)(in) = ADP + phosphate + 5 H(+)(out). Functionally, produces ATP from ADP in the presence of a proton gradient across the membrane. The alpha chain is a regulatory subunit. The chain is ATP synthase subunit alpha from Streptococcus suis (strain 98HAH33).